Here is a 171-residue protein sequence, read N- to C-terminus: MPVFGLAALKLNWEALSTPKFRVTFAQWVCSLLMWSLMASYSKHGEFKFVVVFGLVMWGLASTYLVYQLLNGPPLAPIVEFWANVAAGSLAFICLVLASATCNRAVGEPQTKVCSGELKPKASAAFAFLLLCAYGGLAYLSWRTWRNPPTIASYALHDDPEFAQPLHSSHK.

Topologically, residues Met1–Arg22 are cytoplasmic. The helical transmembrane segment at Val23 to Ser42 threads the bilayer. Over Lys43–Lys48 the chain is Extracellular. The chain crosses the membrane as a helical span at residues Phe49 to Leu69. Topologically, residues Leu70 to Pro77 are cytoplasmic. The chain crosses the membrane as a helical span at residues Ile78 to Ala98. Residues Ser99–Lys121 are Extracellular-facing. A helical membrane pass occupies residues Ala122 to Trp142. Over Arg143–Lys171 the chain is Cytoplasmic.

This sequence belongs to the Casparian strip membrane proteins (CASP) family. In terms of assembly, homodimer and heterodimers.

Its subcellular location is the cell membrane. This Chlorokybus atmophyticus (Soil alga) protein is CASP-like protein 0U2.